The primary structure comprises 288 residues: Transmembrane and coiled-coil domain-containing protein 5A (288 aa).

Residues 13 to 105 (IISLNMDLER…VHSISELQRK (93 aa)) are a coiled coil. Residues 227-249 (SLLFSTLFFIRLLGYLIFHLSFI) form a helical membrane-spanning segment.

Testis-specific. Expressed in spermatogenic cells of testis but disappear by the time mature spermatozoa are formed (at protein level).

It is found in the endoplasmic reticulum membrane. It localises to the nucleus membrane. The polypeptide is Transmembrane and coiled-coil domain-containing protein 5A (Tmco5a) (Rattus norvegicus (Rat)).